The chain runs to 450 residues: tRNA-2-methylthio-N(6)-dimethylallyladenosine synthase (450 aa).

Positions 3–119 (RRYYITTFGC…LGELLEQVWN (117 aa)) constitute an MTTase N-terminal domain. 6 residues coordinate [4Fe-4S] cluster: Cys-12, Cys-48, Cys-82, Cys-154, Cys-158, and Cys-161. The Radical SAM core domain maps to 140–377 (RDSTVTAWVN…NHLVAKIAGD (238 aa)). The TRAM domain occupies 380 to 444 (QRYLGREEVV…AFSLSGVPLA (65 aa)).

Belongs to the methylthiotransferase family. MiaB subfamily. Monomer. It depends on [4Fe-4S] cluster as a cofactor.

It is found in the cytoplasm. It catalyses the reaction N(6)-dimethylallyladenosine(37) in tRNA + (sulfur carrier)-SH + AH2 + 2 S-adenosyl-L-methionine = 2-methylsulfanyl-N(6)-dimethylallyladenosine(37) in tRNA + (sulfur carrier)-H + 5'-deoxyadenosine + L-methionine + A + S-adenosyl-L-homocysteine + 2 H(+). In terms of biological role, catalyzes the methylthiolation of N6-(dimethylallyl)adenosine (i(6)A), leading to the formation of 2-methylthio-N6-(dimethylallyl)adenosine (ms(2)i(6)A) at position 37 in tRNAs that read codons beginning with uridine. This chain is tRNA-2-methylthio-N(6)-dimethylallyladenosine synthase, found in Thermosynechococcus vestitus (strain NIES-2133 / IAM M-273 / BP-1).